The sequence spans 308 residues: Taste receptor type 2 member 41 (308 aa).

The Extracellular portion of the chain corresponds to 1-6 (MLSTVS). Residues 7 to 27 (VFFMSIFVLLCFLGILANGFI) traverse the membrane as a helical segment. Residues 28 to 60 (VLMLSREWLWRGRLLPSDMILLSLGTSRFCQQC) are Cytoplasmic-facing. The helical transmembrane segment at 61-81 (VGLVNSFYYSLHLVEYSRSLA) threads the bilayer. Residues 82 to 90 (RQLISLHMD) lie on the Extracellular side of the membrane. A helical transmembrane segment spans residues 91–111 (FLNSATFWFGTWLSVLFCIKI). The Cytoplasmic portion of the chain corresponds to 112–128 (ANFSHPAFLWLKWRFPA). Residues 129 to 149 (LVPWLLLGSILVSFIVTLMFF) form a helical membrane-spanning segment. Residues 150–184 (WGNHTVYQAFLRRKFSGNTTFKEWNRRLEIDYFMP) lie on the Extracellular side of the membrane. 2 N-linked (GlcNAc...) asparagine glycosylation sites follow: Asn-152 and Asn-167. Residues 185–205 (LKLVTTSIPCSLFLVSILLLI) form a helical membrane-spanning segment. Residues 206-239 (NSLRRHSQRMQHNAHSLQDPNTQAHSRALKSLIS) lie on the Cytoplasmic side of the membrane. Residues 240–260 (FLVLYALSYVSMVIDATVVIS) traverse the membrane as a helical segment. Over 261–264 (SDNV) the chain is Extracellular. A helical transmembrane segment spans residues 265-285 (WYWPWQIILYLCMSVHPFILI). The Cytoplasmic portion of the chain corresponds to 286–308 (TNNLKFRGTFRQLLLLARGFWVT).

The protein belongs to the G-protein coupled receptor T2R family. As to expression, expressed in subsets of taste receptor cells of the tongue and palate epithelium and exclusively in gustducin-positive cells. Expressed in 15% taste bud cells in circumvallate and foliate papillae but only in 2% in fungiform papillae. Expressed in the duodenum, antrum and fundus (part of the stomach).

It localises to the membrane. Its function is as follows. Receptor that may play a role in the perception of bitterness and is gustducin-linked. May play a role in sensing the chemical composition of the gastrointestinal content. The activity of this receptor may stimulate alpha gustducin, mediate PLC-beta-2 activation and lead to the gating of TRPM5. The chain is Taste receptor type 2 member 41 (Tas2r41) from Rattus norvegicus (Rat).